The following is a 310-amino-acid chain: Phosphoribosylaminoimidazole-succinocarboxamide synthase (310 aa).

Belongs to the SAICAR synthetase family.

The enzyme catalyses 5-amino-1-(5-phospho-D-ribosyl)imidazole-4-carboxylate + L-aspartate + ATP = (2S)-2-[5-amino-1-(5-phospho-beta-D-ribosyl)imidazole-4-carboxamido]succinate + ADP + phosphate + 2 H(+). The protein operates within purine metabolism; IMP biosynthesis via de novo pathway; 5-amino-1-(5-phospho-D-ribosyl)imidazole-4-carboxamide from 5-amino-1-(5-phospho-D-ribosyl)imidazole-4-carboxylate: step 1/2. This is Phosphoribosylaminoimidazole-succinocarboxamide synthase from Cytophaga hutchinsonii (strain ATCC 33406 / DSM 1761 / CIP 103989 / NBRC 15051 / NCIMB 9469 / D465).